The sequence spans 241 residues: Uridylate kinase (241 aa).

Residue 14 to 17 (KLSG) participates in ATP binding. Residues 22-27 (GGLGMG) are involved in allosteric activation by GTP. Residue Gly56 participates in UMP binding. Residues Gly57 and Arg61 each coordinate ATP. Residues Asp77 and 138 to 145 (TGNPFFTT) each bind UMP. ATP-binding residues include Thr165, Tyr171, and Asp174.

It belongs to the UMP kinase family. As to quaternary structure, homohexamer.

The protein resides in the cytoplasm. The enzyme catalyses UMP + ATP = UDP + ADP. Its pathway is pyrimidine metabolism; CTP biosynthesis via de novo pathway; UDP from UMP (UMPK route): step 1/1. With respect to regulation, allosterically activated by GTP. Inhibited by UTP. Its function is as follows. Catalyzes the reversible phosphorylation of UMP to UDP. This chain is Uridylate kinase, found in Psychrobacter sp. (strain PRwf-1).